Here is a 490-residue protein sequence, read N- to C-terminus: Betaine aldehyde dehydrogenase (490 aa).

K(+) is bound by residues Thr26, Ile27, and Asp93. NAD(+) is bound at residue Gly150–Trp152. Catalysis depends on Lys162, which acts as the Charge relay system. Lys176–Glu179 contacts NAD(+). Val180 provides a ligand contact to K(+). Gly230–Ser233 is an NAD(+) binding site. A K(+)-binding site is contributed by Leu246. Glu252 (proton acceptor) is an active-site residue. NAD(+) is bound by residues Gly254, Cys286, and Glu387. Cys286 serves as the catalytic Nucleophile. At Cys286 the chain carries Cysteine sulfenic acid (-SOH). Lys457 and Gly460 together coordinate K(+). Glu464 functions as the Charge relay system in the catalytic mechanism.

Belongs to the aldehyde dehydrogenase family. As to quaternary structure, dimer of dimers. K(+) is required as a cofactor.

The enzyme catalyses betaine aldehyde + NAD(+) + H2O = glycine betaine + NADH + 2 H(+). Its pathway is amine and polyamine biosynthesis; betaine biosynthesis via choline pathway; betaine from betaine aldehyde: step 1/1. In terms of biological role, involved in the biosynthesis of the osmoprotectant glycine betaine. Catalyzes the irreversible oxidation of betaine aldehyde to the corresponding acid. In Klebsiella pneumoniae (strain 342), this protein is Betaine aldehyde dehydrogenase.